The primary structure comprises 372 residues: MEYGLDLEYSFNEFFKGFGLSSEIAHIIWLPIPMLLVLVAAVVGVLVTVWLERKISAAAQQRIGPEYAGALGVLQPIADGLKLLVKEDIIPAKADGILFTAGPILVLVPVILSWLIVPFGQNLLISNVGIGIFLWIALSSIQPIGLLMSGYASNNKYSLLGGLRAAAQSISYEIPLALSVLAIVLMTNSLSTIDIVNQQSGAGILSWNIWRQPVGFIVFWICALAECERLPFDLPEAEEELVAGYQTEYAGMKFALFYLGSYINLILSALLVSILYLGGWGFPIPVELIAKFLHLPINAPVIQVFTASIGIVMTVLKAYLLVFIAILLRWTTPRVRIDQLLDLGWKFLLPISLANLLITAGLKLAFPQFFGG.

A run of 8 helical transmembrane segments spans residues 27–47 (IIWL…GVLV), 97–117 (ILFT…WLIV), 128–148 (VGIG…GLLM), 176–196 (LALS…IDIV), 204–224 (ILSW…ICAL), 266–286 (ILSA…PIPV), 308–328 (SIGI…AILL), and 347–367 (FLLP…LAFP).

The protein belongs to the complex I subunit 1 family. In terms of assembly, NDH-1 is composed of at least 11 different subunits.

The protein localises to the cellular thylakoid membrane. The catalysed reaction is a plastoquinone + NADH + (n+1) H(+)(in) = a plastoquinol + NAD(+) + n H(+)(out). It catalyses the reaction a plastoquinone + NADPH + (n+1) H(+)(in) = a plastoquinol + NADP(+) + n H(+)(out). NDH-1 shuttles electrons from an unknown electron donor, via FMN and iron-sulfur (Fe-S) centers, to quinones in the respiratory and/or the photosynthetic chain. The immediate electron acceptor for the enzyme in this species is believed to be plastoquinone. Couples the redox reaction to proton translocation, and thus conserves the redox energy in a proton gradient. The polypeptide is NAD(P)H-quinone oxidoreductase subunit 1 (Prochlorococcus marinus (strain MIT 9312)).